The sequence spans 400 residues: MLARRKPVLPALTINPAIAEGPSPTSEGASEANLVDLQKKLAELELDEQQKKRLEAFLTQKAKVGELKDDDFERISELGAGNGGVVTKVQHRPSGLIMARKLIHLEIKPAIRNQIIRELQVLHECNSPYIVGFYGAFYSDGEISICMEHMDGGSLDQVLKEAKRIPEEILGKVSIAVLRGLAYLREKHQIMHRDVKPSNILVNSRGEIKLCDFGVSGQLIDSMANSFVGTRSYMSPERLQGTHYSVQSDIWSMGLSLVELSIGRYPIPPPDAKELEAIFGRPMVDGIEGEPHSISPRPRPPGRPISGHGTDSRPAMAIFELLDYIVNEPPPKLPNGVFTQDFQEFVNKCLIKNPAERADLKMLMSHTFIKRSEVEEVDFAGWLCKTLRLNQPSTPTRTAV.

Met1 is modified (N-acetylmethionine). Ser23 bears the Phosphoserine mark. The region spanning 72–369 (FERISELGAG…LKMLMSHTFI (298 aa)) is the Protein kinase domain. ATP-binding positions include 78–86 (LGAGNGGVV) and Lys101. The active-site Proton acceptor is the Asp194. Phosphoserine; by RAF is present on Ser222. A phosphoserine mark is found at Ser226, Ser293, Ser295, and Ser306. Residues 288-309 (EGEPHSISPRPRPPGRPISGHG) are disordered. Residues Thr394 and Thr396 each carry the phosphothreonine modification.

Belongs to the protein kinase superfamily. STE Ser/Thr protein kinase family. MAP kinase kinase subfamily. Interacts with MORG1. Interacts with SGK1. Interacts with KSR1. Interacts with KSR1 and BRAF; the interaction with KSR1 mediates KSR1-BRAF dimerization. Interacts with GLS. Mg(2+) serves as cofactor. Post-translationally, MAPKK is itself dependent on Ser/Thr phosphorylation for activity catalyzed by MAP kinase kinase kinases (RAF or MEKK1).

It is found in the cytoplasm. The protein localises to the membrane. It catalyses the reaction L-seryl-[protein] + ATP = O-phospho-L-seryl-[protein] + ADP + H(+). The catalysed reaction is L-threonyl-[protein] + ATP = O-phospho-L-threonyl-[protein] + ADP + H(+). It carries out the reaction L-tyrosyl-[protein] + ATP = O-phospho-L-tyrosyl-[protein] + ADP + H(+). In terms of biological role, catalyzes the concomitant phosphorylation of a threonine and a tyrosine residue in a Thr-Glu-Tyr sequence located in MAP kinases. Activates the ERK1 and ERK2 MAP kinases. Activates BRAF in a KSR1 or KSR2-dependent manner; by binding to KSR1 or KSR2 releases the inhibitory intramolecular interaction between KSR1 or KSR2 protein kinase and N-terminal domains which promotes KSR1 or KSR2-BRAF dimerization and BRAF activation. This is Dual specificity mitogen-activated protein kinase kinase 2 (MAP2K2) from Canis lupus familiaris (Dog).